Here is an 88-residue protein sequence, read N- to C-terminus: Small ribosomal subunit protein uS17 (88 aa).

This sequence belongs to the universal ribosomal protein uS17 family. Part of the 30S ribosomal subunit.

Its function is as follows. One of the primary rRNA binding proteins, it binds specifically to the 5'-end of 16S ribosomal RNA. In Pseudomonas aeruginosa (strain LESB58), this protein is Small ribosomal subunit protein uS17.